Consider the following 1184-residue polypeptide: DNA-directed RNA polymerase subunit beta (1184 aa).

This sequence belongs to the RNA polymerase beta chain family. In terms of assembly, the RNAP catalytic core consists of 2 alpha, 1 beta, 1 beta' and 1 omega subunit. When a sigma factor is associated with the core the holoenzyme is formed, which can initiate transcription.

The catalysed reaction is RNA(n) + a ribonucleoside 5'-triphosphate = RNA(n+1) + diphosphate. In terms of biological role, DNA-dependent RNA polymerase catalyzes the transcription of DNA into RNA using the four ribonucleoside triphosphates as substrates. This chain is DNA-directed RNA polymerase subunit beta, found in Fusobacterium nucleatum subsp. nucleatum (strain ATCC 25586 / DSM 15643 / BCRC 10681 / CIP 101130 / JCM 8532 / KCTC 2640 / LMG 13131 / VPI 4355).